The sequence spans 90 residues: MARVTVQDAVEKVGNRFDLVLIAARRARQMQTGGKDSLVPEENDKPTVIALREIEEGLITKDVLDARERQEQQEQEAAELAAVSSIAHTR.

Positions 69–90 are disordered; sequence RQEQQEQEAAELAAVSSIAHTR.

Belongs to the RNA polymerase subunit omega family. The RNAP catalytic core consists of 2 alpha, 1 beta, 1 beta' and 1 omega subunit. When a sigma factor is associated with the core the holoenzyme is formed, which can initiate transcription.

It catalyses the reaction RNA(n) + a ribonucleoside 5'-triphosphate = RNA(n+1) + diphosphate. In terms of biological role, promotes RNA polymerase assembly. Latches the N- and C-terminal regions of the beta' subunit thereby facilitating its interaction with the beta and alpha subunits. The sequence is that of DNA-directed RNA polymerase subunit omega from Vibrio atlanticus (strain LGP32) (Vibrio splendidus (strain Mel32)).